Reading from the N-terminus, the 254-residue chain is K88 minor fimbrial subunit FaeI (254 aa).

Residues 1–20 form the signal peptide; it reads MKKVTLFLFVVSLLPSTVLA.

This sequence belongs to the fimbrial K88 protein family.

Its subcellular location is the fimbrium. In terms of biological role, K88 minor fimbrial subunit, plays an essential role in the biogenesis of the K88 fimbriae. Fimbriae (also called pili), are polar filaments radiating from the surface of the bacterium to a length of 0.5-1.5 micrometers and numbering 100-300 per cell. They enable bacteria to colonize the epithelium of specific host organs. The polypeptide is K88 minor fimbrial subunit FaeI (faeI) (Escherichia coli).